The chain runs to 1201 residues: DNA-directed RNA polymerase subunit beta' (1201 aa).

Residues C60, C62, C75, and C78 each coordinate Zn(2+). Mg(2+) is bound by residues D449, D451, and D453. Residues C818, C892, C899, and C902 each contribute to the Zn(2+) site.

The protein belongs to the RNA polymerase beta' chain family. In terms of assembly, the RNAP catalytic core consists of 2 alpha, 1 beta, 1 beta' and 1 omega subunit. When a sigma factor is associated with the core the holoenzyme is formed, which can initiate transcription. Mg(2+) serves as cofactor. Zn(2+) is required as a cofactor.

It carries out the reaction RNA(n) + a ribonucleoside 5'-triphosphate = RNA(n+1) + diphosphate. Functionally, DNA-dependent RNA polymerase catalyzes the transcription of DNA into RNA using the four ribonucleoside triphosphates as substrates. The protein is DNA-directed RNA polymerase subunit beta' of Listeria innocua serovar 6a (strain ATCC BAA-680 / CLIP 11262).